The following is a 545-amino-acid chain: Glucans biosynthesis protein G (545 aa).

The N-terminal stretch at 1-34 (MVSLLRCQSFKPSSSLICSLALSAAFALSSSAFA) is a signal peptide. The disordered stretch occupies residues 38–60 (KPAENKPATPVVSPPKATAQPAN).

Belongs to the OpgD/OpgG family.

It localises to the periplasm. Its pathway is glycan metabolism; osmoregulated periplasmic glucan (OPG) biosynthesis. Involved in the biosynthesis of osmoregulated periplasmic glucans (OPGs). In Shewanella sp. (strain ANA-3), this protein is Glucans biosynthesis protein G.